A 217-amino-acid polypeptide reads, in one-letter code: PRA1 family protein B3 (217 aa).

The interval 1-24 is disordered; that stretch reads MMANPPTLPISDHSGGGSQSQQPV. A run of 5 helical transmembrane segments spans residues 76 to 96, 98 to 118, 138 to 158, 162 to 182, and 193 to 213; these read LPYF…LSLL, HPFS…LYLF, LGVL…GSLL, LMIG…EDLF, and LLSF…STPA.

Belongs to the PRA1 family. Interacts with PRA1B1, PRA1B2, PRA1B4, PRA1B5, PRA1B6 and PRA1E. Expressed in hypocotyls and shoot apex.

The protein localises to the endosome membrane. In terms of biological role, may be involved in both secretory and endocytic intracellular trafficking in the endosomal/prevacuolar compartments. The protein is PRA1 family protein B3 (PRA1B3) of Arabidopsis thaliana (Mouse-ear cress).